The sequence spans 193 residues: Potassium-transporting ATPase KdpC subunit (193 aa).

The chain crosses the membrane as a helical span at residues Pro-7 to Met-27.

Belongs to the KdpC family. As to quaternary structure, the system is composed of three essential subunits: KdpA, KdpB and KdpC.

It localises to the cell inner membrane. Functionally, part of the high-affinity ATP-driven potassium transport (or Kdp) system, which catalyzes the hydrolysis of ATP coupled with the electrogenic transport of potassium into the cytoplasm. This subunit acts as a catalytic chaperone that increases the ATP-binding affinity of the ATP-hydrolyzing subunit KdpB by the formation of a transient KdpB/KdpC/ATP ternary complex. This Burkholderia orbicola (strain MC0-3) protein is Potassium-transporting ATPase KdpC subunit.